Reading from the N-terminus, the 437-residue chain is Phosphoribosylamine--glycine ligase (437 aa).

The ATP-grasp domain maps to 109–316; sequence KDFLARHGIP…LLDLIEAALN (208 aa). 135–196 contributes to the ATP binding site; sequence VRQQGAPIVI…EEYLDGEEAS (62 aa). E286 and N288 together coordinate Mg(2+).

The protein belongs to the GARS family. Requires Mg(2+) as cofactor. Mn(2+) is required as a cofactor.

It carries out the reaction 5-phospho-beta-D-ribosylamine + glycine + ATP = N(1)-(5-phospho-beta-D-ribosyl)glycinamide + ADP + phosphate + H(+). The protein operates within purine metabolism; IMP biosynthesis via de novo pathway; N(1)-(5-phospho-D-ribosyl)glycinamide from 5-phospho-alpha-D-ribose 1-diphosphate: step 2/2. The sequence is that of Phosphoribosylamine--glycine ligase from Xylella fastidiosa (strain 9a5c).